Here is a 419-residue protein sequence, read N- to C-terminus: UDP-N-acetylglucosamine 1-carboxyvinyltransferase (419 aa).

22 to 23 serves as a coordination point for phosphoenolpyruvate; it reads KN. UDP-N-acetyl-alpha-D-glucosamine is bound at residue Arg93. Cys117 (proton donor) is an active-site residue. A 2-(S-cysteinyl)pyruvic acid O-phosphothioketal modification is found at Cys117. Residues 122–126, Asp308, and Ile330 each bind UDP-N-acetyl-alpha-D-glucosamine; that span reads RPVDL.

Belongs to the EPSP synthase family. MurA subfamily.

The protein localises to the cytoplasm. The enzyme catalyses phosphoenolpyruvate + UDP-N-acetyl-alpha-D-glucosamine = UDP-N-acetyl-3-O-(1-carboxyvinyl)-alpha-D-glucosamine + phosphate. It functions in the pathway cell wall biogenesis; peptidoglycan biosynthesis. In terms of biological role, cell wall formation. Adds enolpyruvyl to UDP-N-acetylglucosamine. The chain is UDP-N-acetylglucosamine 1-carboxyvinyltransferase from Pseudomonas putida (Arthrobacter siderocapsulatus).